The following is a 143-amino-acid chain: Mite group 2 allergen Pso o 2 (143 aa).

The signal sequence occupies residues 1–17; sequence MMKTLVVLAITLAVVSA. Intrachain disulfides connect C25–C134, C38–C43, and C89–C94.

The protein belongs to the NPC2 family.

It localises to the secreted. The protein is Mite group 2 allergen Pso o 2 (ALLA) of Psoroptes ovis (Sheep scab mite).